A 346-amino-acid polypeptide reads, in one-letter code: Aspartate-semialdehyde dehydrogenase (346 aa).

NADP(+) contacts are provided by residues 12–15 and 40–41; these read SGAV and RS. Arg101 is a binding site for phosphate. The Acyl-thioester intermediate role is filled by Cys131. Gln158 lines the substrate pocket. 161-162 is a binding site for NADP(+); sequence SG. Lys225 contributes to the phosphate binding site. Arg246 lines the substrate pocket. Residue His253 is the Proton acceptor of the active site. Gln326 lines the NADP(+) pocket.

This sequence belongs to the aspartate-semialdehyde dehydrogenase family. As to quaternary structure, homodimer.

The catalysed reaction is L-aspartate 4-semialdehyde + phosphate + NADP(+) = 4-phospho-L-aspartate + NADPH + H(+). Its pathway is amino-acid biosynthesis; L-lysine biosynthesis via DAP pathway; (S)-tetrahydrodipicolinate from L-aspartate: step 2/4. It participates in amino-acid biosynthesis; L-methionine biosynthesis via de novo pathway; L-homoserine from L-aspartate: step 2/3. The protein operates within amino-acid biosynthesis; L-threonine biosynthesis; L-threonine from L-aspartate: step 2/5. Its function is as follows. Catalyzes the NADPH-dependent formation of L-aspartate-semialdehyde (L-ASA) by the reductive dephosphorylation of L-aspartyl-4-phosphate. This is Aspartate-semialdehyde dehydrogenase from Helicobacter pylori (strain J99 / ATCC 700824) (Campylobacter pylori J99).